The sequence spans 477 residues: Aspartyl/glutamyl-tRNA(Asn/Gln) amidotransferase subunit B (477 aa).

This sequence belongs to the GatB/GatE family. GatB subfamily. As to quaternary structure, heterotrimer of A, B and C subunits.

The catalysed reaction is L-glutamyl-tRNA(Gln) + L-glutamine + ATP + H2O = L-glutaminyl-tRNA(Gln) + L-glutamate + ADP + phosphate + H(+). It catalyses the reaction L-aspartyl-tRNA(Asn) + L-glutamine + ATP + H2O = L-asparaginyl-tRNA(Asn) + L-glutamate + ADP + phosphate + 2 H(+). Its function is as follows. Allows the formation of correctly charged Asn-tRNA(Asn) or Gln-tRNA(Gln) through the transamidation of misacylated Asp-tRNA(Asn) or Glu-tRNA(Gln) in organisms which lack either or both of asparaginyl-tRNA or glutaminyl-tRNA synthetases. The reaction takes place in the presence of glutamine and ATP through an activated phospho-Asp-tRNA(Asn) or phospho-Glu-tRNA(Gln). The sequence is that of Aspartyl/glutamyl-tRNA(Asn/Gln) amidotransferase subunit B from Legionella pneumophila (strain Corby).